A 492-amino-acid chain; its full sequence is Protein adenylyltransferase Fic (492 aa).

Residues 1–18 show a composition bias toward low complexity; sequence MGTEAEQPSPPAQQQDQE. The disordered stretch occupies residues 1–26; the sequence is MGTEAEQPSPPAQQQDQENPPLCKAQ. The helical transmembrane segment at 33 to 55 threads the bilayer; it reads LYRFVLIFVAGSLAAWTFHALSS. 2 TPR repeats span residues 118 to 151 and 152 to 186; these read ALGA…APRH and PEVL…SPSN. An Inhibitory (S/T)XXXE(G/N) motif motif is present at residues 243–248; that stretch reads SVGIEG. ATP is bound by residues E247 and 328–331; that span reads VGGH. Residues 297–432 form the Fido domain; it reads ITIKDILELH…IRPFVRFIAD (136 aa). Residue H375 is part of the active site. ATP is bound by residues 379–386, 411–412, and N419; these read DGNGRTSR and YY.

It belongs to the fic family. As to quaternary structure, homodimer; homodimerization may regulate adenylyltransferase and phosphodiesterase activities.

The protein localises to the membrane. It carries out the reaction L-tyrosyl-[protein] + ATP = O-(5'-adenylyl)-L-tyrosyl-[protein] + diphosphate. It catalyses the reaction L-threonyl-[protein] + ATP = 3-O-(5'-adenylyl)-L-threonyl-[protein] + diphosphate. The catalysed reaction is 3-O-(5'-adenylyl)-L-threonyl-[protein] + H2O = L-threonyl-[protein] + AMP + H(+). With respect to regulation, the side chain of Glu-247 determines which of the two opposing activities (AMPylase or de-AMPylase) will take place. In response to endoplasmic reticulum stress, mediates de-AMPylase activity. Adenylyltransferase activity is inhibited by the inhibitory helix present at the N-terminus: Glu-247 binds ATP and competes with ATP-binding at Arg-386, thereby preventing adenylyltransferase activity. In unstressed cells, disengagement of Glu-247 promotes adenylyltransferase activity. Activation dissociates ATP-binding from Glu-247, allowing ordered binding of the entire ATP moiety with the alpha-phosphate in an orientation that is productive for accepting an incoming target hydroxyl side chain. Protein that can both mediate the addition of adenosine 5'-monophosphate (AMP) to specific residues of target proteins (AMPylation), and the removal of the same modification from target proteins (de-AMPylation), depending on the context. The side chain of Glu-247 determines which of the two opposing activities (AMPylase or de-AMPylase) will take place. Acts as a key regulator of the unfolded protein response (UPR) by mediating AMPylation or de-AMPylation of Hsc70-3/BiP. In unstressed cells, acts as an adenylyltransferase by mediating AMPylation of Hsc70-3/BiP at 'Thr-518', thereby inactivating it. In response to endoplasmic reticulum stress, acts as a phosphodiesterase by mediating removal of ATP (de-AMPylation) from Hsc70-3/BiP at 'Thr-518', leading to restore HSPA5/BiP activity. The chain is Protein adenylyltransferase Fic from Drosophila melanogaster (Fruit fly).